The chain runs to 292 residues: Phosphatidylserine decarboxylase proenzyme (292 aa).

Residues aspartate 89, histidine 146, and serine 252 each act as charge relay system; for autoendoproteolytic cleavage activity in the active site. Catalysis depends on serine 252, which acts as the Schiff-base intermediate with substrate; via pyruvic acid; for decarboxylase activity. Serine 252 is modified (pyruvic acid (Ser); by autocatalysis).

The protein belongs to the phosphatidylserine decarboxylase family. PSD-B subfamily. Prokaryotic type I sub-subfamily. Heterodimer of a large membrane-associated beta subunit and a small pyruvoyl-containing alpha subunit. The cofactor is pyruvate. Is synthesized initially as an inactive proenzyme. Formation of the active enzyme involves a self-maturation process in which the active site pyruvoyl group is generated from an internal serine residue via an autocatalytic post-translational modification. Two non-identical subunits are generated from the proenzyme in this reaction, and the pyruvate is formed at the N-terminus of the alpha chain, which is derived from the carboxyl end of the proenzyme. The autoendoproteolytic cleavage occurs by a canonical serine protease mechanism, in which the side chain hydroxyl group of the serine supplies its oxygen atom to form the C-terminus of the beta chain, while the remainder of the serine residue undergoes an oxidative deamination to produce ammonia and the pyruvoyl prosthetic group on the alpha chain. During this reaction, the Ser that is part of the protease active site of the proenzyme becomes the pyruvoyl prosthetic group, which constitutes an essential element of the active site of the mature decarboxylase.

The protein localises to the cell membrane. The enzyme catalyses a 1,2-diacyl-sn-glycero-3-phospho-L-serine + H(+) = a 1,2-diacyl-sn-glycero-3-phosphoethanolamine + CO2. It functions in the pathway phospholipid metabolism; phosphatidylethanolamine biosynthesis; phosphatidylethanolamine from CDP-diacylglycerol: step 2/2. Functionally, catalyzes the formation of phosphatidylethanolamine (PtdEtn) from phosphatidylserine (PtdSer). The protein is Phosphatidylserine decarboxylase proenzyme of Shewanella sp. (strain MR-7).